Here is a 242-residue protein sequence, read N- to C-terminus: tRNA pseudouridine synthase A (242 aa).

D51 serves as the catalytic Nucleophile. Y107 is a binding site for substrate.

It belongs to the tRNA pseudouridine synthase TruA family. As to quaternary structure, homodimer.

The catalysed reaction is uridine(38/39/40) in tRNA = pseudouridine(38/39/40) in tRNA. Formation of pseudouridine at positions 38, 39 and 40 in the anticodon stem and loop of transfer RNAs. The chain is tRNA pseudouridine synthase A from Helicobacter acinonychis (strain Sheeba).